Consider the following 70-residue polypeptide: Translational regulator CsrA (70 aa).

The protein belongs to the CsrA/RsmA family. As to quaternary structure, homodimer; the beta-strands of each monomer intercalate to form a hydrophobic core, while the alpha-helices form wings that extend away from the core.

It localises to the cytoplasm. Functionally, a translational regulator that binds mRNA to regulate translation initiation and/or mRNA stability. Usually binds in the 5'-UTR at or near the Shine-Dalgarno sequence preventing ribosome-binding, thus repressing translation. Its main target seems to be the major flagellin gene, while its function is anatagonized by FliW. This is Translational regulator CsrA from Rhodopirellula baltica (strain DSM 10527 / NCIMB 13988 / SH1).